A 279-amino-acid chain; its full sequence is Tetra-spanning protein 1 (279 aa).

The next 2 membrane-spanning stretches (helical) occupy residues 25–45 (VWFS…LQAI) and 50–70 (APPF…AIVL). Residue asparagine 77 is glycosylated (N-linked (GlcNAc...) asparagine). A helical membrane pass occupies residues 100 to 122 (YFILALSMLIDRPILFSLAPYAI). An N-linked (GlcNAc...) asparagine glycan is attached at asparagine 143. A helical transmembrane segment spans residues 172-192 (MQLVASLETFLLFRLFFGVFL). The disordered stretch occupies residues 260–279 (VGTAQSRPTASSSTTAPSST). A compositionally biased stretch (low complexity) spans 262-279 (TAQSRPTASSSTTAPSST).

This sequence belongs to the PER33/POM33 family. Interacts with RTN1 and YOP1.

The protein resides in the golgi apparatus membrane. It is found in the endoplasmic reticulum membrane. Its subcellular location is the nucleus membrane. In terms of biological role, required for the correct positioning of the cellular division plane by delimiting the actomyosin ring assembly at the cell equator. In Schizosaccharomyces pombe (strain 972 / ATCC 24843) (Fission yeast), this protein is Tetra-spanning protein 1 (tts1).